We begin with the raw amino-acid sequence, 453 residues long: Probable exopolygalacturonase B (453 aa).

An N-terminal signal peptide occupies residues Met1–Ser16. 2 N-linked (GlcNAc...) asparagine glycosylation sites follow: Asn185 and Asn225. The active-site Proton donor is Asp255. Residues Cys257 and Cys274 are joined by a disulfide bond. Asn263 and Asn275 each carry an N-linked (GlcNAc...) asparagine glycan. His278 is a catalytic residue. PbH1 repeat units follow at residues Ile295–Ala316 and Ile327–Gln348. 4 N-linked (GlcNAc...) asparagine glycosylation sites follow: Asn302, Asn329, Asn354, and Asn366. The stretch at Pro362–Asn405 is one PbH1 3 repeat. A disulfide bond links Cys392 and Cys398. The N-linked (GlcNAc...) asparagine glycan is linked to Asn436.

This sequence belongs to the glycosyl hydrolase 28 family.

Its subcellular location is the secreted. The catalysed reaction is [(1-&gt;4)-alpha-D-galacturonosyl](n) + H2O = alpha-D-galacturonate + [(1-&gt;4)-alpha-D-galacturonosyl](n-1). Functionally, specific in hydrolyzing the terminal glycosidic bond of polygalacturonic acid and oligogalacturonates. The chain is Probable exopolygalacturonase B (pgxB) from Aspergillus fumigatus (strain CBS 144.89 / FGSC A1163 / CEA10) (Neosartorya fumigata).